We begin with the raw amino-acid sequence, 603 residues long: MESSALLTAGVLFLFVAVVAVPIAARLGIGAVLGYLIAGIAIGPWGLGFIRDVDAILHFSELGVVFLMFIIGLELNPSKLWTLRRSIFGVGAAQVGLSTLLLGGALYLTDFSWQSALIGGVGLAMSSTAMALQLMREKGMNRSESGQLGFSVLLFQDLAVIPALALIPILAGVQGDFGDWERIGLKVAAFLGMLIGGRYLVRPLFRFIAASGVREVFTAAALLLVLGSALFMETLGLSMALGTFIAGILLAESEYRHELEIAIEPFKGLLLGLFFISVGMALNLGILYTHIVKIMVAVLVLVAVKAAVLYFLARVNRMRRSERLQFAGVLSQGGEFAFVLFSAAASFNVLKGEQLPLLLVTVTLSMMTTPLLMQLIDRILARRYNVQDVPDEKPYVEDDEPQVIVVGFGRFGQVISRLLMANKMRITVLERDISAVSLMRSYGYKVYYGDATELELLRSAGADKARSIVITCNAPEDTMEIVHLCQQHFPNLEILARARGRVEAHELLQTGVRHFSRETFSSALELGRKTLVTLGMHPHQAMRAQQHFRRLDMRMLRELMPQLTGDVAQISRVKEARRELEDIFQREMQRERRRPSVWDEDDE.

13 consecutive transmembrane segments (helical) span residues 5-25 (ALLT…PIAA), 29-49 (IGAV…GLGF), 55-75 (AILH…GLEL), 87-107 (IFGV…GALY), 115-135 (SALI…LQLM), 152-172 (VLLF…ILAG), 180-202 (WERI…YLVR), 207-227 (FIAA…LVLG), 230-250 (LFME…GILL), 268-288 (GLLL…GILY), 291-311 (IVKI…VLYF), 326-346 (FAGV…AAAS), and 356-376 (PLLL…MQLI). The region spanning 400–521 (EPQVIVVGFG…VRHFSRETFS (122 aa)) is the RCK N-terminal domain.

Belongs to the monovalent cation:proton antiporter 2 (CPA2) transporter (TC 2.A.37) family. KefB subfamily. Interacts with the regulatory subunit KefG.

It localises to the cell inner membrane. Its function is as follows. Pore-forming subunit of a potassium efflux system that confers protection against electrophiles. Catalyzes K(+)/H(+) antiport. The sequence is that of Glutathione-regulated potassium-efflux system protein KefB from Pectobacterium carotovorum subsp. carotovorum (strain PC1).